Consider the following 362-residue polypeptide: MGFAARPFHIVFSLFVLAGATQALIICPFDSIYQFGDSISDTGNYIRILPNGPAAAAANFPYGITFPGIPTGRFSDGRLIVDFIARVLGLPLLNPYLQQNASFKNGVNFAVGGATALNSSVLAAAGVQIPDIYLIPLSTQLNWFQTYLRSNCSSPTECSKKVQNSLFLIGNIGNNDVNYALPYRTIQEIEAYVPSIAKAVANATREIIRLGGRRIIVPGTFPFGCLPRNLYLFPNGDKDDLGCLRRLNDLSIYFNNLFQQALNSLRIEFPQAVIIYADYYNAFRFLLRNARALGFTSTLQSCCGIGGPYNFDLNRLCGFPGVPVCRNPREYIQWDGFHYTEAAHRHIVQYLIPDILKELKCS.

The signal sequence occupies residues 1–23 (MGFAARPFHIVFSLFVLAGATQA). Catalysis depends on S38, which acts as the Nucleophile. N-linked (GlcNAc...) asparagine glycans are attached at residues N100, N118, N151, and N202. Residues D335 and H338 contribute to the active site.

The protein belongs to the 'GDSL' lipolytic enzyme family. As to expression, confined to roots.

It catalyses the reaction 17-O-acetylnorajmaline + H2O = norajmaline + acetate + H(+). The catalysed reaction is 17-O-acetylajmaline + H2O = ajmaline + acetate + H(+). Its pathway is alkaloid biosynthesis; ajmaline biosynthesis. Its function is as follows. Acetylesterase involved in the biosynthesis of ajmaline-type monoterpenoid indole alkaloids (MIAs) natural products, important plant-derived pharmaceuticals used in the therapy of heart disorders. Deacetylates 17-O-acetylnorajmaline to produce norajmaline. May also catalyze the conversion of 17-O-acetylajmaline to ajmaline. This chain is Acetylajmalan esterase 2, found in Rauvolfia serpentina (Serpentine wood).